Here is a 210-residue protein sequence, read N- to C-terminus: Keratin-associated protein 4-9 (210 aa).

28 repeat units span residues 24 to 28, 29 to 33, 34 to 38, 39 to 43, 44 to 48, 49 to 53, 54 to 58, 59 to 63, 69 to 73, 74 to 78, 84 to 88, 89 to 93, 94 to 98, 99 to 103, 104 to 108, 109 to 113, 114 to 118, 119 to 123, 124 to 128, 129 to 133, 134 to 138, 139 to 143, 144 to 148, 149 to 153, 159 to 163, 164 to 168, 169 to 173, and 174 to 178. The 29 X 5 AA repeats of C-C-[RQVHIEK]-[SPTR]-[VSTQCRNP] stretch occupies residues 24–178; sequence CCRPSCCETT…CCRPCCCVRP (155 aa).

This sequence belongs to the KRTAP type 4 family. Interacts with hair keratins. As to expression, expressed in the hair follicles.

Its function is as follows. In the hair cortex, hair keratin intermediate filaments are embedded in an interfilamentous matrix, consisting of hair keratin-associated proteins (KRTAP), which are essential for the formation of a rigid and resistant hair shaft through their extensive disulfide bond cross-linking with abundant cysteine residues of hair keratins. The matrix proteins include the high-sulfur and high-glycine-tyrosine keratins. The polypeptide is Keratin-associated protein 4-9 (KRTAP4-9) (Homo sapiens (Human)).